Consider the following 456-residue polypeptide: Exodeoxyribonuclease 7 large subunit (456 aa).

Belongs to the XseA family. Heterooligomer composed of large and small subunits.

Its subcellular location is the cytoplasm. The catalysed reaction is Exonucleolytic cleavage in either 5'- to 3'- or 3'- to 5'-direction to yield nucleoside 5'-phosphates.. Bidirectionally degrades single-stranded DNA into large acid-insoluble oligonucleotides, which are then degraded further into small acid-soluble oligonucleotides. The protein is Exodeoxyribonuclease 7 large subunit of Escherichia coli (strain ATCC 8739 / DSM 1576 / NBRC 3972 / NCIMB 8545 / WDCM 00012 / Crooks).